The following is a 422-amino-acid chain: Zinc finger protein Gfi-1 (422 aa).

An SNAG domain region spans residues 1–20; sequence MPRSFLVKSKKAHSYHQPRS. The segment at 1–107 is disordered; sequence MPRSFLVKSK…SPASEKSVCP (107 aa). Ser-20 carries the phosphoserine modification. A compositionally biased stretch (low complexity) spans 34–47; that stretch reads APGGADGTSSAGGA. Residue Ser-56 is modified to Phosphoserine. Residues 57–72 are compositionally biased toward polar residues; the sequence is PESQLTEAPDRSSASP. Residues 140-257 are required for interaction with RELA; sequence RPCAALDRGA…LLLGGGSYKC (118 aa). C2H2-type zinc fingers lie at residues 255 to 278, 284 to 306, 312 to 334, 340 to 362, 368 to 390, and 396 to 419; these read YKCIKCSKVFSTPHGLEVHVRRSH, FACEMCGKTFGHAVSLEQHKAVH, FDCKICGKSFKRSSTLSTHLLIH, YPCQYCGKRFHQKSDMKKHTFIH, HKCQVCGKAFSQSSNLITHSRKH, and FGCDLCGKGFQRKVDLRRHRETQH.

Interacts with U2AF1L4. Component of RCOR-GFI-KDM1A-HDAC complexes. Interacts directly with RCOR1, KDM1A and HDAC2. Also interacts with HDAC1 and HDAC3. Interacts (via the zinc-finger domain) with ARIH2; the interaction prevents GFI1 ubiquitination and proteasomal degradation. Interacts with PIAS3; the interaction relieves the inhibitory effect of PIAS3 on STAT3-mediated transcriptional activity. Forms a complex with EHMT2 and HDAC1 to promote 'Lys-9' dimethylation of H3 (H3K9Me2) and repress expression of target genes. Interacts directly with EHMT2. Component of the GFI1-AJUBA-HDAC1 repressor complex. Interacts directly with AJUBA (via ITS LIM domains); the interaction results in the HDAC-dependent corepression of a subset of GFI1 target genes and, occurs independently of the SNAG domain. Interacts with SPI1; the interaction inhibits SPI1 transcriptional activity targeted at macrophage-specific genes, repressing macrophage differentiation of myeloid progenitor cells and promoting granulocyte commitment. Interacts with RUNX1T1; the interaction represses HDAC-mediated transcriptional activity. Interacts with RELA; the interaction occurs on liposaccharide (LPS) stimulation and controls RELA DNA binding activity and regulates endotoxin-mediated TOLL-like receptor inflammatory response. Interacts (via the C-terminal zinc fingers) with ZBTB17; the interaction results in the recruitment of GFI1 to the CDKN1A/p21 and CDKNIB promoters and repression of transcription. Ubiquitinated.

The protein localises to the nucleus. Its function is as follows. Transcription repressor essential for hematopoiesis. Functions in a cell-context and development-specific manner. Binds to 5'-TAAATCAC[AT]GCA-3' in the promoter region of a large number of genes. Component of several complexes, including the EHMT2-GFI1-HDAC1, AJUBA-GFI1-HDAC1 and RCOR-GFI-KDM1A-HDAC complexes, that suppress, via histone deacetylase (HDAC) recruitment, a number of genes implicated in multilineage blood cell development. Regulates neutrophil differentiation, promotes proliferation of lymphoid cells, and is required for granulocyte development. Inhibits SPI1 transcriptional activity at macrophage-specific genes, repressing macrophage differentiation of myeloid progenitor cells and promoting granulocyte commitment. Mediates, together with U2AF1L4, the alternative splicing of CD45 and controls T-cell receptor signaling. Regulates the endotoxin-mediated Toll-like receptor (TLR) inflammatory response by antagonizing RELA. Cooperates with CBFA2T2 to regulate ITGB1-dependent neurite growth. Controls cell-cycle progression by repressing CDKNIA/p21 transcription in response to TGFB1 via recruitment of GFI1 by ZBTB17 to the CDKNIA/p21 and CDKNIB promoters. Required for the maintenance of inner ear hair cells. In addition to its role in transcription, acts as a substrate adapter for PRMT1 in the DNA damage response: facilitates the recognition of TP53BP1 and MRE11 substrates by PRMT1, promoting their methylation and the DNA damage response. The chain is Zinc finger protein Gfi-1 (GFI1) from Canis lupus familiaris (Dog).